Reading from the N-terminus, the 903-residue chain is E3 ubiquitin-protein ligase DDB_G0292642 (903 aa).

5 disordered regions span residues Phe115–Asp137, Leu167–Ser236, Val284–Lys366, Thr415–Ile487, and Asp549–Gly576. Low complexity-rich tracts occupy residues Thr120–Asn130 and Thr178–Thr216. Acidic residues predominate over residues Ser217–Ile232. Composition is skewed to low complexity over residues Thr287–Thr301 and Asn311–Asn323. A coiled-coil region spans residues Asn313–Asn352. Positions Glu329 to Asn345 are enriched in acidic residues. A compositionally biased stretch (low complexity) spans Asn346–Asn364. A compositionally biased stretch (polar residues) spans Thr415–Asn427. Residues Thr428–Thr443 are compositionally biased toward low complexity. Acidic residues-rich tracts occupy residues Asn451–Ile466 and Asp549–Ser568. The stretch at Ala542–Glu569 forms a coiled coil. The TRIAD supradomain stretch occupies residues Glu612–Gln832. The Zn(2+) site is built by Cys616, Cys619, Cys634, His636, Cys639, Cys642, Cys661, Cys666, Cys704, Cys709, Cys725, Cys728, Cys733, Cys736, His741, Cys746, Cys782, and Cys785. An RING-type 1 zinc finger spans residues Cys616–Cys666. An IBR-type zinc finger spans residues Asn683–Cys746. The RING-type 2; atypical zinc finger occupies Cys782–Cys811. Cys795 is a catalytic residue. Zn(2+) is bound by residues Cys800, Cys803, Cys808, Cys811, His819, and Cys828. The helical transmembrane segment at Thr864 to Val884 threads the bilayer.

It belongs to the RBR family. RNF14 subfamily.

It is found in the membrane. It catalyses the reaction [E2 ubiquitin-conjugating enzyme]-S-ubiquitinyl-L-cysteine + [acceptor protein]-L-lysine = [E2 ubiquitin-conjugating enzyme]-L-cysteine + [acceptor protein]-N(6)-ubiquitinyl-L-lysine.. It functions in the pathway protein modification; protein ubiquitination. Its function is as follows. E3 ubiquitin-protein ligase. The protein is E3 ubiquitin-protein ligase DDB_G0292642 of Dictyostelium discoideum (Social amoeba).